We begin with the raw amino-acid sequence, 874 residues long: Alanine--tRNA ligase (874 aa).

Residues His-562, His-566, Cys-665, and His-669 each coordinate Zn(2+).

This sequence belongs to the class-II aminoacyl-tRNA synthetase family. The cofactor is Zn(2+).

The protein localises to the cytoplasm. The catalysed reaction is tRNA(Ala) + L-alanine + ATP = L-alanyl-tRNA(Ala) + AMP + diphosphate. Its function is as follows. Catalyzes the attachment of alanine to tRNA(Ala) in a two-step reaction: alanine is first activated by ATP to form Ala-AMP and then transferred to the acceptor end of tRNA(Ala). Also edits incorrectly charged Ser-tRNA(Ala) and Gly-tRNA(Ala) via its editing domain. The chain is Alanine--tRNA ligase from Pseudomonas putida (strain ATCC 47054 / DSM 6125 / CFBP 8728 / NCIMB 11950 / KT2440).